The primary structure comprises 166 residues: Small ribosomal subunit protein uS5 (166 aa).

The S5 DRBM domain occupies 12–75 (YIEKLVQVNR…EAARRNMIQV (64 aa)).

This sequence belongs to the universal ribosomal protein uS5 family. Part of the 30S ribosomal subunit. Contacts proteins S4 and S8.

Its function is as follows. With S4 and S12 plays an important role in translational accuracy. Functionally, located at the back of the 30S subunit body where it stabilizes the conformation of the head with respect to the body. In Pseudomonas savastanoi pv. phaseolicola (strain 1448A / Race 6) (Pseudomonas syringae pv. phaseolicola (strain 1448A / Race 6)), this protein is Small ribosomal subunit protein uS5.